We begin with the raw amino-acid sequence, 1452 residues long: ABC-type transporter adrC (1452 aa).

The segment at 1–38 is disordered; it reads MAPEEGDQAMSHEDKAACSSLNTTSSTELFDGAPSSEN. The span at 19–28 shows a compositional bias: polar residues; the sequence is SSLNTTSSTE. The ABC transporter 1 domain occupies 116–378; it reads KRLMSIVGNK…FETMGWKRPP (263 aa). The next 6 helical transmembrane spans lie at 487–507, 524–544, 569–589, 598–618, 631–651, and 738–758; these read IPALIATAVAQTVVSLIIGSL, VLFLAVLTNALISLLEITTLY, VIVDFPIKLFRCLLSAIIVYF, SHFFIYIMFQLTAVMTMATIF, AMALAGVVIICIAVYTGFTVP, and GILVAFLVFFYVLYFWLTELI. The ABC transporter 2 domain maps to 813 to 1055; sequence FSWKGLSYDI…TVLEYLEDKG (243 aa). 849 to 856 is a binding site for ATP; it reads GVSGAGKT. 7 helical membrane passes run 1149 to 1169, 1181 to 1201, 1224 to 1244, 1264 to 1284, 1287 to 1307, 1322 to 1344, and 1415 to 1435; these read YILAKFGAGVFCGVFIGFSFW, VLFSLFLLCTIFSTLVNQIMP, VFILCQILVELPWQTLLGICT, LVLLFTVQFFIFASTFAQLVV, VPSVVLGSMLATFTFLLCLLF, IFMNRVSPLTYYVGGISATALHG, and FGIFWVYIIFNVIGAVLLYYL.

The protein belongs to the ABC transporter superfamily. ABCG family. PDR (TC 3.A.1.205) subfamily.

Its subcellular location is the membrane. Functionally, ABC-type transporter; part of the gene cluster that mediates the biosynthesis of the meroterpenoid compound andrastin A, a promising antitumoral compound. Is required for the production of andrastin A but does not have a significant role in its secretion. This Penicillium roqueforti protein is ABC-type transporter adrC.